Reading from the N-terminus, the 53-residue chain is 20 kDa chaperonin (53 aa).

Cpn-10 domain stretches follow at residues 1 to 10 (YTSIKPLGDR) and 11 to 53 (VAEA…KITP).

Belongs to the GroES chaperonin family. As to quaternary structure, forms stable complexes with cpn60 in the presence of ATP. Homotetramer.

The protein resides in the plastid. It localises to the chloroplast. Its function is as follows. Seems to function only as a co-chaperone, along with cpn60, and in certain cases is essential for the discharge of biologically active proteins from cpn60. In Populus euphratica (Euphrates poplar), this protein is 20 kDa chaperonin.